Reading from the N-terminus, the 484-residue chain is Endoglucanase 9 (484 aa).

A signal peptide spans 1 to 21 (MTSLFFFVLLFSSLLISNGDA). The Nucleophile role is filled by Asp-77. Active-site residues include His-402, Asp-453, and Glu-462.

Belongs to the glycosyl hydrolase 9 (cellulase E) family. In terms of tissue distribution, specifically expressed in root cap cells.

The protein resides in the secreted. It is found in the cell wall. It carries out the reaction Endohydrolysis of (1-&gt;4)-beta-D-glucosidic linkages in cellulose, lichenin and cereal beta-D-glucans.. In Arabidopsis thaliana (Mouse-ear cress), this protein is Endoglucanase 9 (CEL3).